The sequence spans 303 residues: Nod factor export ATP-binding protein I (303 aa).

Residues 5–235 form the ABC transporter domain; it reads LQMRNVRKLY…EIGCDVVEVY (231 aa). 37 to 44 provides a ligand contact to ATP; it reads GPNGAGKT.

This sequence belongs to the ABC transporter superfamily. Lipooligosaccharide exporter (TC 3.A.1.102) family. In terms of assembly, the complex is composed of two ATP-binding proteins (NodI) and two transmembrane proteins (NodJ).

The protein resides in the cell inner membrane. Functionally, part of the ABC transporter complex NodIJ involved in the export of the nodulation factors (Nod factors), the bacterial signal molecules that induce symbiosis and subsequent nodulation induction. Nod factors are LCO (lipo-chitin oligosaccharide), a modified beta-1,4-linked N-acetylglucosamine oligosaccharide. This subunit is responsible for energy coupling to the transport system. The protein is Nod factor export ATP-binding protein I of Cupriavidus metallidurans (strain ATCC 43123 / DSM 2839 / NBRC 102507 / CH34) (Ralstonia metallidurans).